A 359-amino-acid polypeptide reads, in one-letter code: DNA polymerase IV (359 aa).

The UmuC domain maps to 4 to 185 (IIHIDMDCYF…LPLSKIPGVG (182 aa)). Mg(2+)-binding residues include Asp-8 and Asp-103. Glu-104 is an active-site residue.

The protein belongs to the DNA polymerase type-Y family. Monomer. Mg(2+) is required as a cofactor.

The protein localises to the cytoplasm. The catalysed reaction is DNA(n) + a 2'-deoxyribonucleoside 5'-triphosphate = DNA(n+1) + diphosphate. Its function is as follows. Poorly processive, error-prone DNA polymerase involved in untargeted mutagenesis. Copies undamaged DNA at stalled replication forks, which arise in vivo from mismatched or misaligned primer ends. These misaligned primers can be extended by PolIV. Exhibits no 3'-5' exonuclease (proofreading) activity. May be involved in translesional synthesis, in conjunction with the beta clamp from PolIII. The sequence is that of DNA polymerase IV from Shewanella frigidimarina (strain NCIMB 400).